The primary structure comprises 35 residues: U14-ctenitoxin-Pn1a (35 aa).

3 disulfide bridges follow: cysteine 3–cysteine 17, cysteine 10–cysteine 22, and cysteine 16–cysteine 32.

Expressed by the venom gland.

The protein resides in the secreted. Its function is as follows. Neurotoxin. The sequence is that of U14-ctenitoxin-Pn1a from Phoneutria nigriventer (Brazilian armed spider).